Consider the following 884-residue polypeptide: Androgen receptor (884 aa).

The interval 1–522 (MEVQLGLGRV…PIDYYFPPQK (522 aa)) is modulating. Positions 1 to 551 (MEVQLGLGRV…GSCKVFFKRA (551 aa)) are interaction with ZNF318. 2 disordered regions span residues 33–145 (VIQN…TLSL) and 174–207 (QQQQ…YLGG). 2 stretches are compositionally biased toward low complexity: residues 55–79 (QQQQ…PQAQ) and 174–196 (QQQQ…AAGA). Serine 61 carries the phosphoserine; by CDK9 modification. Serine 75 carries the phosphoserine modification. Positions 197–207 (PTSSKDSYLGG) are enriched in polar residues. Tyrosine 204 is modified (phosphotyrosine; by CSK). The residue at position 237 (serine 237) is a Phosphoserine. Tyrosine 248 is modified (phosphotyrosine; by CSK and TNK2). The interval 275-294 (DDSADKGTEEPAEYTPFKGS) is disordered. Phosphotyrosine; by CSK is present on residues tyrosine 288, tyrosine 327, tyrosine 338, and tyrosine 343. Tyrosine 344 carries the post-translational modification Phosphotyrosine; by CSK and TNK2. Lysine 367 participates in a covalent cross-link: Glycyl lysine isopeptide (Lys-Gly) (interchain with G-Cter in SUMO). Tyrosine 374 bears the Phosphotyrosine; by CSK mark. Lysine 485 is covalently cross-linked (Glycyl lysine isopeptide (Lys-Gly) (interchain with G-Cter in SUMO)). 2 positions are modified to phosphotyrosine; by CSK: tyrosine 499 and tyrosine 516. Residues 516-883 (YYFPPQKTCL…GKVKPIYFHT (368 aa)) are interaction with LPXN. The segment at residues 523-596 (TCLICGDEAS…AGMTLGARKL (74 aa)) is a DNA-binding region (nuclear receptor). 2 consecutive NR C4-type zinc fingers follow at residues 524–544 (CLIC…CGSC) and 560–584 (CASR…LRKC). Residues 536 to 626 (YGALTCGSCK…TEESSQKLTV (91 aa)) are interaction with HIPK3. The tract at residues 556–883 (QKYLCASRND…GKVKPIYFHT (328 aa)) is interaction with CCAR1. Residues 589–883 (MTLGARKLKK…GKVKPIYFHT (295 aa)) form an interaction with KAT7 region. At serine 615 the chain carries Phosphoserine; by STK4/MST1. Residues 633–864 (ECQPIFLNVL…DFPEMMAEII (232 aa)) form the NR LBD domain. 17beta-hydroxy-5alpha-androstan-3-one-binding residues include asparagine 670 and arginine 717. Glycyl lysine isopeptide (Lys-Gly) (interchain with G-Cter in ubiquitin) cross-links involve residues lysine 810 and lysine 812. Threonine 842 lines the 17beta-hydroxy-5alpha-androstan-3-one pocket. At tyrosine 880 the chain carries Phosphotyrosine; by CSK.

The protein belongs to the nuclear hormone receptor family. NR3 subfamily. Binds DNA as a homodimer. Part of a ternary complex containing AR, EFCAB6/DJBP and PARK7. Interacts with HIPK3 and NR0B2 in the presence of androgen. The ligand binding domain interacts with KAT7/HBO1 in the presence of dihydrotestosterone. Interacts with EFCAB6/DJBP, PQBP1, RANBP9, RBAK, SPDEF, SRA1, TGFB1I1 and RREB1. Interacts with ZMIZ1/ZIMP10 and ZMIZ2/ZMIP7 which both enhance its transactivation activity. Interacts with SLC30A9 and RAD54L2/ARIP4. Interacts with MACROD1 (via macro domain). Interacts via the ligand-binding domain with LXXLL and FXXLF motifs from NCOA1, NCOA2, NCOA3 and MAGEA11. Interacts (via nuclear receptor DNA binding domain and nuclear receptor ligand binding domain) with NCOA4. The AR N-terminal poly-Gln region binds Ran resulting in enhancement of AR-mediated transactivation. Ran-binding decreases as the poly-Gln length increases. Interacts with HIP1 (via coiled coil domain). Interacts (via ligand-binding domain) with TRIM68. Interacts with TNK2. Interacts with USP26. Interacts with RNF6. Interacts (regulated by RNF6 probably through polyubiquitination) with RNF14; regulates AR transcriptional activity. Interacts with PRMT2 and TRIM24. Interacts with RACK1. Interacts with RANBP10; this interaction enhances dihydrotestosterone-induced AR transcriptional activity. Interacts with PRPF6 in a hormone-independent way; this interaction enhances dihydrotestosterone-induced AR transcriptional activity. Interacts with STK4/MST1. Interacts with ZIPK/DAPK3. Interacts with LPXN. Interacts with MAK. Part of a complex containing AR, MAK and NCOA3. Interacts with CRY1. Interacts with CCAR1 and GATA2. Interacts with ZNF318. Interacts with BUD31. Interacts with ARID4A. Interacts with ARID4B. Interacts (via NR LBD domain) with ZBTB7A; the interaction is direct and androgen-dependent. Interacts with NCOR1. Interacts with NCOR2. Interacts with CRY2 in a ligand-dependent manner. Phosphorylated in prostate cancer cells in response to several growth factors including EGF. Phosphorylation is induced by c-Src kinase (CSK). Tyr-499 is one of the major phosphorylation sites and an increase in phosphorylation and Src kinase activity is associated with prostate cancer progression. Phosphorylation by TNK2 enhances the DNA-binding and transcriptional activity. Phosphorylation at Ser-61 by CDK9 regulates AR promoter selectivity and cell growth. In terms of processing, sumoylated on Lys-367 (major) and Lys-485. Ubiquitinated. Deubiquitinated by USP26. 'Lys-6' and 'Lys-27'-linked polyubiquitination by RNF6 modulates AR transcriptional activity and specificity. Post-translationally, palmitoylated by ZDHHC7 and ZDHHC21. Palmitoylation is required for plasma membrane targeting and for rapid intracellular signaling via ERK and AKT kinases and cAMP generation.

Its subcellular location is the nucleus. The protein localises to the cytoplasm. Functionally, steroid hormone receptors are ligand-activated transcription factors that regulate eukaryotic gene expression and affect cellular proliferation and differentiation in target tissues. Transcription factor activity is modulated by bound coactivator and corepressor proteins like ZBTB7A that recruits NCOR1 and NCOR2 to the androgen response elements/ARE on target genes, negatively regulating androgen receptor signaling and androgen-induced cell proliferation. Transcription activation is also down-regulated by NR0B2. Activated, but not phosphorylated, by HIPK3 and ZIPK/DAPK3. In Eulemur fulvus collaris (Collared brown lemur), this protein is Androgen receptor (AR).